Reading from the N-terminus, the 115-residue chain is ER exit protein (115 aa).

Belongs to the STEEP1 family.

In terms of biological role, may stimulate membrane curvature formation and subsequent endoplasmic reticulum exit site (ERES) establishment. The protein is ER exit protein of Schizosaccharomyces pombe (strain 972 / ATCC 24843) (Fission yeast).